Consider the following 201-residue polypeptide: Recombination protein RecR (201 aa).

Residues Cys-59 to Cys-74 form a C4-type zinc finger. The region spanning Ser-82 to Pro-177 is the Toprim domain.

Belongs to the RecR family.

Its function is as follows. May play a role in DNA repair. It seems to be involved in an RecBC-independent recombinational process of DNA repair. It may act with RecF and RecO. This is Recombination protein RecR from Rickettsia peacockii (strain Rustic).